Reading from the N-terminus, the 778-residue chain is Hyaluronate lyase (778 aa).

The tat-type signal signal peptide spans 1-33 (MSWNRRSFLGALGVTCLAGAGMVPIVRPRTAAA). Active-site residues include asparagine 200, histidine 250, and tyrosine 259.

Belongs to the polysaccharide lyase 8 family. In terms of processing, predicted to be exported by the Tat system. The position of the signal peptide cleavage has not been experimentally proven.

The catalysed reaction is [hyaluronan](n) = n 3-(4-deoxy-beta-D-gluc-4-enuronosyl)-N-acetyl-D-glucosamine + H2O. Is salt-dependent and is active over a wide range of NaCl concentrations. Activity is slightly promoted by Ni(2+), and inhibited by most of the tested metal ions, including Li(+), K(+), Ba(2+), Mg(2+), Zn(2+), Ca(2+), Mn(2+) and Al(3+). In terms of biological role, degrades hyaluronic acid into unsaturated disaccharides as the end products. Exhibits very low activity against various types of chondroitin sulfate variants. The chain is Hyaluronate lyase from Thermasporomyces composti.